Consider the following 150-residue polypeptide: Deoxyuridine 5'-triphosphate nucleotidohydrolase (150 aa).

Substrate-binding positions include 69 to 71 (RSG), Asn-82, 86 to 88 (LID), and Met-96.

Belongs to the dUTPase family. Mg(2+) serves as cofactor.

It carries out the reaction dUTP + H2O = dUMP + diphosphate + H(+). It participates in pyrimidine metabolism; dUMP biosynthesis; dUMP from dCTP (dUTP route): step 2/2. Functionally, this enzyme is involved in nucleotide metabolism: it produces dUMP, the immediate precursor of thymidine nucleotides and it decreases the intracellular concentration of dUTP so that uracil cannot be incorporated into DNA. In Acinetobacter baumannii (strain AB307-0294), this protein is Deoxyuridine 5'-triphosphate nucleotidohydrolase.